The chain runs to 89 residues: Small ribosomal subunit protein uS15 (89 aa).

The protein belongs to the universal ribosomal protein uS15 family. Part of the 30S ribosomal subunit. Forms a bridge to the 50S subunit in the 70S ribosome, contacting the 23S rRNA.

In terms of biological role, one of the primary rRNA binding proteins, it binds directly to 16S rRNA where it helps nucleate assembly of the platform of the 30S subunit by binding and bridging several RNA helices of the 16S rRNA. Functionally, forms an intersubunit bridge (bridge B4) with the 23S rRNA of the 50S subunit in the ribosome. The sequence is that of Small ribosomal subunit protein uS15 from Streptococcus thermophilus (strain CNRZ 1066).